The following is a 506-amino-acid chain: Ribose import ATP-binding protein RbsA 2 (506 aa).

2 ABC transporter domains span residues 6 to 241 and 254 to 499; these read LSMT…VGRV and EKSN…SITI. 38–45 lines the ATP pocket; sequence GENGAGKS.

This sequence belongs to the ABC transporter superfamily. Ribose importer (TC 3.A.1.2.1) family. As to quaternary structure, the complex is composed of an ATP-binding protein (RbsA), two transmembrane proteins (RbsC) and a solute-binding protein (RbsB).

It localises to the cell inner membrane. The catalysed reaction is D-ribose(out) + ATP + H2O = D-ribose(in) + ADP + phosphate + H(+). Functionally, part of the ABC transporter complex RbsABC involved in ribose import. Responsible for energy coupling to the transport system. The chain is Ribose import ATP-binding protein RbsA 2 from Agrobacterium fabrum (strain C58 / ATCC 33970) (Agrobacterium tumefaciens (strain C58)).